The following is a 531-amino-acid chain: Endoglucanase 7 (531 aa).

The signal sequence occupies residues 1–27 (MRGRALVLVAALLLQLLLLAAAGGAGA). Asp-89 serves as the catalytic Nucleophile. Catalysis depends on residues His-430, Asp-482, and Glu-491.

This sequence belongs to the glycosyl hydrolase 9 (cellulase E) family. Ubiquitous.

The protein resides in the secreted. It carries out the reaction Endohydrolysis of (1-&gt;4)-beta-D-glucosidic linkages in cellulose, lichenin and cereal beta-D-glucans.. The sequence is that of Endoglucanase 7 (GLU10) from Oryza sativa subsp. japonica (Rice).